Reading from the N-terminus, the 249-residue chain is Cyclin-dependent kinase inhibitor 2 (249 aa).

The interval 118–180 is disordered; it reads KVCTQAGEDH…MCRRSSTTSA (63 aa). A compositionally biased stretch (polar residues) spans 161 to 180; sequence AESNQEAKQQMCRRSSTTSA.

The protein belongs to the CDI family. ICK/KRP subfamily.

The sequence is that of Cyclin-dependent kinase inhibitor 2 (KRP2) from Oryza sativa subsp. japonica (Rice).